Here is a 110-residue protein sequence, read N- to C-terminus: Cytochrome subunit of sulfide dehydrogenase (110 aa).

Residues 1-16 form the signal peptide; sequence MLAAAPLLLASGNGFA. Positions 41, 44, 45, and 83 each coordinate heme c.

As to quaternary structure, dimer of one cytochrome and one flavoprotein. Binds 1 heme c group covalently per subunit.

It is found in the periplasm. Functionally, monoheme cytochrome that function as the electron transport subunit of sulfide dehydrogenase. This chain is Cytochrome subunit of sulfide dehydrogenase (fccA), found in Chlorobaculum tepidum (strain ATCC 49652 / DSM 12025 / NBRC 103806 / TLS) (Chlorobium tepidum).